Consider the following 674-residue polypeptide: DNA ligase (674 aa).

NAD(+) contacts are provided by residues 35 to 39 (DYDFD), 84 to 85 (SL), and glutamate 118. Lysine 120 serves as the catalytic N6-AMP-lysine intermediate. Positions 141, 184, 297, and 321 each coordinate NAD(+). Residues cysteine 415, cysteine 418, cysteine 433, and cysteine 439 each contribute to the Zn(2+) site. A BRCT domain is found at 598–674 (LVNTNFEGLT…ITEDEFDALL (77 aa)).

The protein belongs to the NAD-dependent DNA ligase family. LigA subfamily. Mg(2+) serves as cofactor. Requires Mn(2+) as cofactor.

It carries out the reaction NAD(+) + (deoxyribonucleotide)n-3'-hydroxyl + 5'-phospho-(deoxyribonucleotide)m = (deoxyribonucleotide)n+m + AMP + beta-nicotinamide D-nucleotide.. Its function is as follows. DNA ligase that catalyzes the formation of phosphodiester linkages between 5'-phosphoryl and 3'-hydroxyl groups in double-stranded DNA using NAD as a coenzyme and as the energy source for the reaction. It is essential for DNA replication and repair of damaged DNA. The polypeptide is DNA ligase (Chlorobium phaeovibrioides (strain DSM 265 / 1930) (Prosthecochloris vibrioformis (strain DSM 265))).